We begin with the raw amino-acid sequence, 368 residues long: Phosphoribosylaminoimidazole-succinocarboxamide synthase (368 aa).

This sequence belongs to the SAICAR synthetase family.

It carries out the reaction 5-amino-1-(5-phospho-D-ribosyl)imidazole-4-carboxylate + L-aspartate + ATP = (2S)-2-[5-amino-1-(5-phospho-beta-D-ribosyl)imidazole-4-carboxamido]succinate + ADP + phosphate + 2 H(+). The protein operates within purine metabolism; IMP biosynthesis via de novo pathway; 5-amino-1-(5-phospho-D-ribosyl)imidazole-4-carboxamide from 5-amino-1-(5-phospho-D-ribosyl)imidazole-4-carboxylate: step 1/2. The chain is Phosphoribosylaminoimidazole-succinocarboxamide synthase from Vibrio cholerae serotype O1 (strain ATCC 39315 / El Tor Inaba N16961).